Consider the following 233-residue polypeptide: Zinc import ATP-binding protein ZnuC (233 aa).

One can recognise an ABC transporter domain in the interval 6 to 222; that stretch reads IEFRNVSKKF…SEFSNALSAL (217 aa). 38-45 contacts ATP; that stretch reads GPNGAGKT.

This sequence belongs to the ABC transporter superfamily. Zinc importer (TC 3.A.1.15.5) family. As to quaternary structure, the complex is composed of two ATP-binding proteins (ZnuC), two transmembrane proteins (ZnuB) and a solute-binding protein (ZnuA).

It localises to the cell inner membrane. The catalysed reaction is Zn(2+)(out) + ATP(in) + H2O(in) = Zn(2+)(in) + ADP(in) + phosphate(in) + H(+)(in). Part of the ABC transporter complex ZnuABC involved in zinc import. Responsible for energy coupling to the transport system. This chain is Zinc import ATP-binding protein ZnuC, found in Rickettsia conorii (strain ATCC VR-613 / Malish 7).